A 526-amino-acid chain; its full sequence is Cytochrome P450 monooxygenase ucsK (526 aa).

Residues 7-27 (PVLAAATAVSFGFYLAGLFVY) form a helical membrane-spanning segment. An N-linked (GlcNAc...) asparagine glycan is attached at N403. A heme-binding site is contributed by C467.

Belongs to the cytochrome P450 family. The cofactor is heme.

It is found in the membrane. It participates in mycotoxin biosynthesis. Cytochrome P450 monooxygenase; part of the gene cluster that mediates the biosynthesis of UCS1025A, a member of the pyrrolizidinone family that acts as a strong telomerase inhibitor and displays potent antibacterial and antitumor properties. These compounds share a hemiaminal-containing pyrrolizidinone core fused with a gamma-lactone, giving a furopyrrolizidine that is connected to a decalin fragment. The polyketide synthase module (PKS) of the PKS-NRPS ucsA is responsible for the synthesis of the polyketide backbone via the condensation of an acetyl-CoA starter unit with 6 malonyl-CoA units. The downstream nonribosomal peptide synthetase (NRPS) module then amidates the carboxyl end of the polyketide with a 2S,3S-methylproline derived from L-isoleucine by the 2-oxoglutarate-dependent dioxygenase ucsF which converts L-isoleucine to (4S,5S)-4-methylpyrroline-5-carboxylate that is further converted to 2S,3S-methylproline by the pyrroline-5-carboxylate reductase ucsG. Reductive release of the completed aminoacyl polyketide from the assembly line can form the 3-pyrrolin-2-one structure via an intramolecular Knoevenagel reaction. Because ucsA lacks a designated enoylreductase (ER) domain, the required activity is provided the enoyl reductase ucsL. This keto acyclic precursor is the substrate of the Diels-Alderase ucsH, that catalyzes the Diels-Alder cycloaddition. Oxidation of the 3S-methyl group to a carboxylate by the cytochrome P450 monooxygenase ucsK allows an oxa-Michael cyclization that might involve the reductase/dehydrogenase ucsI and which furnishes the furopyrrolizidine. The oxidase ucsJ likely plays a critical role in stereoselective reduction of the C5-C6 double bond to afford the required R-configured carboxylate group. Further enolization and oxidation at C5 by an unidentified enzyme affords the last intermediate that can undergo oxa-Michael cyclization to yield UCS1025A. The sequence is that of Cytochrome P450 monooxygenase ucsK from Acremonium sp.